Reading from the N-terminus, the 189-residue chain is UPF0301 protein CAB604 (189 aa).

Belongs to the UPF0301 (AlgH) family.

The sequence is that of UPF0301 protein CAB604 from Chlamydia abortus (strain DSM 27085 / S26/3) (Chlamydophila abortus).